The sequence spans 588 residues: Probable G-protein coupled receptor 162 (588 aa).

At 1 to 17 the chain is on the extracellular side; the sequence is MARGGLGAEEASLRSNA. A helical transmembrane segment spans residues 18-38; sequence LSWLACGLLALLANAWIILSI. The Cytoplasmic segment spans residues 39–49; that stretch reads SAKQQKHKPLE. The chain crosses the membrane as a helical span at residues 50–70; it reads LLLCFLAGTHILMAAVPLTTF. Residues 71 to 91 lie on the Extracellular side of the membrane; that stretch reads AVVQLRRQASSDYDWNESICK. Asn86 carries N-linked (GlcNAc...) asparagine glycosylation. The chain crosses the membrane as a helical span at residues 92-112; that stretch reads VFVSTYYTLALATCFTVASLS. Residues 113–133 are Cytoplasmic-facing; it reads YHRMWMVRWPVNYRLSNAKKQ. The helical transmembrane segment at 134 to 154 threads the bilayer; it reads ALHAVMGIWMVSFILSTLPSI. At 155-174 the chain is on the extracellular side; it reads GWHNNGERYYARGCQFIVSK. Residues 175 to 195 form a helical membrane-spanning segment; that stretch reads IGLGFGVCFSLLLLGGIVMGL. Residues 196 to 275 are Cytoplasmic-facing; that stretch reads VCVAITFYQT…SLQVTNLVSA (80 aa). The chain crosses the membrane as a helical span at residues 276–296; sequence IVFLYDSLTGVPILVVSFFSL. Residues 297–303 are Extracellular-facing; it reads KSDSAPP. The helical transmembrane segment at 304–324 threads the bilayer; it reads WMVLAVLWCSMAQTLLLPSFI. Over 325 to 588 the chain is Cytoplasmic; sequence WSCERYRADV…GNPIFPQLTL (264 aa). 2 positions are modified to phosphoserine: Ser413 and Ser435. Disordered stretches follow at residues 511–545 and 561–588; these read ETPLPSPTASPGPSPRRPRPLGFSPRRLSLGSPDS and SLTGSEGSSRAWGRPWGPGNPIFPQLTL. Over residues 514–525 the composition is skewed to pro residues; that stretch reads LPSPTASPGPSP. Positions 530 to 540 are enriched in low complexity; the sequence is PLGFSPRRLSL.

This sequence belongs to the G-protein coupled receptor 1 family.

Its subcellular location is the cell membrane. Orphan receptor. The sequence is that of Probable G-protein coupled receptor 162 (Gpr162) from Mus musculus (Mouse).